The chain runs to 301 residues: Glycine--tRNA ligase alpha subunit (301 aa).

This sequence belongs to the class-II aminoacyl-tRNA synthetase family. Tetramer of two alpha and two beta subunits.

The protein localises to the cytoplasm. The enzyme catalyses tRNA(Gly) + glycine + ATP = glycyl-tRNA(Gly) + AMP + diphosphate. This Shewanella halifaxensis (strain HAW-EB4) protein is Glycine--tRNA ligase alpha subunit.